The following is a 414-amino-acid chain: Putative truncated GMC-type inactive oxidoreductase R832 (414 aa).

An N-terminal signal peptide occupies residues 1 to 20 (MNPTKLFLVFVAFAFAIINA). 38–67 (DYIIVGSGPGGSRAVQQCIAKGHKCTLVER) contacts FAD.

It belongs to the GMC oxidoreductase family. FAD is required as a cofactor.

In Acanthamoeba polyphaga (Amoeba), this protein is Putative truncated GMC-type inactive oxidoreductase R832.